Reading from the N-terminus, the 317-residue chain is L-lactate dehydrogenase 1 (317 aa).

Residues valine 17, aspartate 38, lysine 43, tyrosine 69, and glycine 83–alanine 84 contribute to the NAD(+) site. Residues glutamine 86 and arginine 92 each coordinate substrate. Residues serine 105, alanine 122–asparagine 124, and serine 147 each bind NAD(+). Residue asparagine 124–aspartate 127 coordinates substrate. A substrate-binding site is contributed by aspartate 152 to arginine 155. The Proton acceptor role is filled by histidine 179. Tyrosine 223 carries the post-translational modification Phosphotyrosine. Threonine 232 contributes to the substrate binding site.

The protein belongs to the LDH/MDH superfamily. LDH family. In terms of assembly, homotetramer.

Its subcellular location is the cytoplasm. It catalyses the reaction (S)-lactate + NAD(+) = pyruvate + NADH + H(+). It functions in the pathway fermentation; pyruvate fermentation to lactate; (S)-lactate from pyruvate: step 1/1. Its function is as follows. Catalyzes the conversion of lactate to pyruvate (Potential). Appears to be the primary factor that allows S.aureus growth during nitrosative stress in both aerobically and anaerobically cultured cells. The protein is L-lactate dehydrogenase 1 of Staphylococcus aureus (strain MRSA252).